We begin with the raw amino-acid sequence, 534 residues long: Echilunin cytochrome P450 monooxygenase (534 aa).

A helical transmembrane segment spans residues 18 to 38; it reads VSPAALSWAVVAIYLGTFFWL. Residue Cys-441 participates in heme binding.

It belongs to the cytochrome P450 family. The cofactor is heme.

Its subcellular location is the membrane. It carries out the reaction preechinulin + reduced [NADPH--hemoprotein reductase] + O2 = neoechinulin A + oxidized [NADPH--hemoprotein reductase] + 2 H2O + H(+). It functions in the pathway secondary metabolite biosynthesis. It participates in alkaloid biosynthesis. Cytochrome P450 monooxygenase; part of the gene cluster that mediates the biosynthesis of echinulin family alkaloid. The pathway begins with the biosynthesis of the cyclic dipeptide cyclo-L-Trp-L-Ala (cyclo-TA) by the NRPS echPS via condensation of L-alanine and L-tryptophan. The prenyltransferase echPT1 then catalyzes the first prenylation step, a reverse prenylation reaction at C2, to yield preechinulin. Preechinulin is the substrate of the cytochrome P450 monooxygenase echP450 that catalyzes the formation of the double bond between C10 and C11 to produce neoechulin A. The unique prenyltransferase echPT2 functions as a competitive enzyme with echP450 for preechinulin metabolization and uses preechinulin for effective regiospecific prenylations. Preechinulin is prenylated by echPT2 at C5 or C7. C7-prenylation leads to accumulation of tardioxopiperazine B without further modification by echPT2. In contrast, the C5-prenylated tardioxopiperazine A can be prenylated again by echPT2, predominantly at C7 to form echinulin or less frequently at C4 to give variecolorin L. EchPT2 also accepts neoechilunin A to produce varlecolorin G (prenylation at C5) or isoechinulin A (prenylation at C7). EchPT2 further converts isoechinulin A into dehydroechinulin. Moreover, a yet unidentified enzyme can also convert neoechilunin A into neoechilunin B by introducing a double bond between positions C14 and C17 and thus provides a further substrate to echPT2 for C5 and C7 prenylation. This chain is Echilunin cytochrome P450 monooxygenase, found in Aspergillus ruber (strain CBS 135680).